The sequence spans 249 residues: Ribosomal RNA small subunit methyltransferase J (249 aa).

Asp169 serves as a coordination point for S-adenosyl-L-methionine.

Belongs to the methyltransferase superfamily. RsmJ family.

The protein resides in the cytoplasm. It carries out the reaction guanosine(1516) in 16S rRNA + S-adenosyl-L-methionine = N(2)-methylguanosine(1516) in 16S rRNA + S-adenosyl-L-homocysteine + H(+). Specifically methylates the guanosine in position 1516 of 16S rRNA. The protein is Ribosomal RNA small subunit methyltransferase J of Buchnera aphidicola subsp. Schizaphis graminum (strain Sg).